Consider the following 484-residue polypeptide: Ferrochelatase-2, chloroplastic (484 aa).

It belongs to the ferrochelatase family.

It is found in the plastid. It localises to the chloroplast. The catalysed reaction is heme b + 2 H(+) = protoporphyrin IX + Fe(2+). It participates in porphyrin-containing compound metabolism; protoheme biosynthesis; protoheme from protoporphyrin-IX: step 1/1. Its function is as follows. Catalyzes the ferrous insertion into protoporphyrin IX. In Hordeum vulgare (Barley), this protein is Ferrochelatase-2, chloroplastic (HEMH).